The primary structure comprises 227 residues: ATP phosphoribosyltransferase (227 aa).

Belongs to the ATP phosphoribosyltransferase family. Short subfamily. As to quaternary structure, heteromultimer composed of HisG and HisZ subunits.

It localises to the cytoplasm. The enzyme catalyses 1-(5-phospho-beta-D-ribosyl)-ATP + diphosphate = 5-phospho-alpha-D-ribose 1-diphosphate + ATP. It functions in the pathway amino-acid biosynthesis; L-histidine biosynthesis; L-histidine from 5-phospho-alpha-D-ribose 1-diphosphate: step 1/9. Functionally, catalyzes the condensation of ATP and 5-phosphoribose 1-diphosphate to form N'-(5'-phosphoribosyl)-ATP (PR-ATP). Has a crucial role in the pathway because the rate of histidine biosynthesis seems to be controlled primarily by regulation of HisG enzymatic activity. The chain is ATP phosphoribosyltransferase from Rhodospirillum rubrum (strain ATCC 11170 / ATH 1.1.1 / DSM 467 / LMG 4362 / NCIMB 8255 / S1).